A 132-amino-acid chain; its full sequence is UPF0299 membrane protein Ent638_2744 (132 aa).

4 helical membrane passes run 8–28 (VWQY…GIFI), 31–51 (LLPI…LLLA), 63–83 (GCFV…VGVM), and 93–113 (FGPI…VVSW).

It belongs to the UPF0299 family.

It is found in the cell inner membrane. This is UPF0299 membrane protein Ent638_2744 from Enterobacter sp. (strain 638).